The following is a 451-amino-acid chain: MLLDEIKNLNFLIMGLGLNGGGVALSRFLLKRGAKLVITDLKSETELALSIDALRDFEDQIRYVLGKHDVNDFKNADIVVKNPGVKPNNKYLKFAKRIETDISLFLMFNKNPIVAVTGTKGKSTLVSLLYQALKEKYPGVKLGGNIGVSPLSFFDQLDGKSPLILELSSWQLQSLENFNPIISIITNVYNDHQNYYLNFDDYIIDKSKIFVNQTSGIVIIQDQAYCKYFSKFKSKVRVILFSEFNPCDFDQDIFYCNEGKVYFNGNLIGSFSNSRAVFIIPKVITFFVSYYLNIDLNRTGQILSNFKGIEHRLEFVKSVQNVMFYNDTASTIPESTVLSVKSLKTKDNRINLIVGGTDKELDFLSFSKIADIVRTWILIRGSATVKIIKILEKSSIQYFLFDSLRDAVNYAFKISSPGDIVLFSPASASFELFNNEFDRGLQFKNLVNNLG.

118 to 124 (GTKGKST) is an ATP binding site.

This sequence belongs to the MurCDEF family.

The protein resides in the cytoplasm. The catalysed reaction is UDP-N-acetyl-alpha-D-muramoyl-L-alanine + D-glutamate + ATP = UDP-N-acetyl-alpha-D-muramoyl-L-alanyl-D-glutamate + ADP + phosphate + H(+). Its pathway is cell wall biogenesis; peptidoglycan biosynthesis. Its function is as follows. Cell wall formation. Catalyzes the addition of glutamate to the nucleotide precursor UDP-N-acetylmuramoyl-L-alanine (UMA). This is UDP-N-acetylmuramoylalanine--D-glutamate ligase from Borreliella burgdorferi (strain ZS7) (Borrelia burgdorferi).